The sequence spans 241 residues: Carboxy-S-adenosyl-L-methionine synthase (241 aa).

S-adenosyl-L-methionine contacts are provided by residues tyrosine 38, 63–65, 88–89, 116–117, asparagine 131, and arginine 198; these read GCS, DN, and DI.

Belongs to the class I-like SAM-binding methyltransferase superfamily. Cx-SAM synthase family. In terms of assembly, homodimer.

It catalyses the reaction prephenate + S-adenosyl-L-methionine = carboxy-S-adenosyl-L-methionine + 3-phenylpyruvate + H2O. Its function is as follows. Catalyzes the conversion of S-adenosyl-L-methionine (SAM) to carboxy-S-adenosyl-L-methionine (Cx-SAM). The protein is Carboxy-S-adenosyl-L-methionine synthase of Actinobacillus pleuropneumoniae serotype 5b (strain L20).